The following is a 377-amino-acid chain: Protein RecA (377 aa).

Residues 1–13 are compositionally biased toward polar residues; it reads MSNEGKPLQSTES. Residues 1–20 form a disordered region; that stretch reads MSNEGKPLQSTESTKIDAKS. Residue 82–89 coordinates ATP; that stretch reads GPESSGKT. Residues 346-377 form a disordered region; the sequence is GSEVSANSMRPLASAARQASSRPKLSQVSANG. A compositionally biased stretch (polar residues) spans 362 to 377; that stretch reads RQASSRPKLSQVSANG.

The protein belongs to the RecA family.

Its subcellular location is the cytoplasm. Functionally, can catalyze the hydrolysis of ATP in the presence of single-stranded DNA, the ATP-dependent uptake of single-stranded DNA by duplex DNA, and the ATP-dependent hybridization of homologous single-stranded DNAs. It interacts with LexA causing its activation and leading to its autocatalytic cleavage. The protein is Protein RecA of Prochlorococcus marinus (strain NATL1A).